The chain runs to 70 residues: Small ribosomal subunit protein bS21B (70 aa).

This sequence belongs to the bacterial ribosomal protein bS21 family.

This Paraburkholderia xenovorans (strain LB400) protein is Small ribosomal subunit protein bS21B.